The chain runs to 315 residues: Ribosomal RNA small subunit methyltransferase H (315 aa).

S-adenosyl-L-methionine contacts are provided by residues 33–35 (GGH), D52, F84, D106, and Q113.

It belongs to the methyltransferase superfamily. RsmH family.

It is found in the cytoplasm. It catalyses the reaction cytidine(1402) in 16S rRNA + S-adenosyl-L-methionine = N(4)-methylcytidine(1402) in 16S rRNA + S-adenosyl-L-homocysteine + H(+). In terms of biological role, specifically methylates the N4 position of cytidine in position 1402 (C1402) of 16S rRNA. This chain is Ribosomal RNA small subunit methyltransferase H, found in Lactobacillus acidophilus (strain ATCC 700396 / NCK56 / N2 / NCFM).